The primary structure comprises 833 residues: Heat shock transcription factor (833 aa).

Residue Met1 is modified to N-acetylmethionine. Over residues 1-16 the composition is skewed to polar residues; sequence MNNAANTGTTNESNVS. 2 disordered regions span residues 1 to 31 and 62 to 92; these read MNNA…NDDD and NPSL…STHL. The span at 69-80 shows a compositional bias: low complexity; the sequence is SAASPVPSSSFF. Thr97 is subject to Phosphothreonine. The span at 150 to 161 shows a compositional bias: polar residues; sequence PSSGTTNAQPRQ. Disordered regions lie at residues 150 to 170 and 277 to 309; these read PSSG…QSHK and GSSN…NNSN. Residues 170-259 mediate DNA binding; the sequence is KSRPAFVNKL…SDDKWQFENE (90 aa). The flexible linker stretch occupies residues 260–280; it reads NFIRGREDLLEKIIRQKGSSN. Over residues 277–296 the composition is skewed to low complexity; the sequence is GSSNNHNSPSGNGNPANGSN. The segment at 350–403 is involved in trimerization; that stretch reads ELEQIKYNQIAISKDLLRINKDNELLWQENMMARERHRTQQQALEKMFRFLTSI. Over residues 447–457 the composition is skewed to basic and acidic residues; it reads SNDSFINDDRN. The disordered stretch occupies residues 447–493; the sequence is SNDSFINDDRNSFTNATTNARNNMSPNNDDNSIDTASTNTTNRKKNI. A phosphoserine mark is found at Ser450, Ser458, Ser471, Ser478, and Ser528. Residues 458-487 are compositionally biased toward polar residues; sequence SFTNATTNARNNMSPNNDDNSIDTASTNTT. Polar residues predominate over residues 542 to 554; sequence RANSSTSSENPSL. 3 disordered regions span residues 542-626, 657-765, and 778-799; these read RANS…HNES, GYPN…RVSP, and SDNL…APEN. Positions 571–580 are enriched in acidic residues; the sequence is PFDDEEEEET. Polar residues predominate over residues 588–600; that stretch reads RDPNNQTSENTFD. Residues 610–626 show a composition bias toward basic and acidic residues; that stretch reads DDLKKDSHTNDNKHNES. Residues 660–675 are compositionally biased toward low complexity; the sequence is NKSFNNKTSSTNTNSN. Polar residues predominate over residues 676–687; it reads MESAVNVNSPGF. A compositionally biased stretch (low complexity) spans 697-713; it reads SNSPNSVHSVPSNGSGS. Composition is skewed to polar residues over residues 727–739, 752–763, and 778–794; these read ASTS…NGSG, NDNNTSEGSTRV, and SDNL…TQAD.

It belongs to the HSF family. As to quaternary structure, homotrimer. Homotrimerization increases the affinity of HSF1 to DNA. Exhibits temperature-dependent phosphorylation that activates the transcriptional capacity.

The protein resides in the nucleus. Functionally, DNA-binding transcription factor that specifically binds heat shock promoter elements (HSE) and activates transcription. This is Heat shock transcription factor from Saccharomyces cerevisiae (strain ATCC 204508 / S288c) (Baker's yeast).